A 322-amino-acid chain; its full sequence is Homoserine kinase (322 aa).

Residue 107–117 (PLSSGMGGSAA) participates in ATP binding.

Belongs to the GHMP kinase family. Homoserine kinase subfamily.

Its subcellular location is the cytoplasm. It catalyses the reaction L-homoserine + ATP = O-phospho-L-homoserine + ADP + H(+). It functions in the pathway amino-acid biosynthesis; L-threonine biosynthesis; L-threonine from L-aspartate: step 4/5. Functionally, catalyzes the ATP-dependent phosphorylation of L-homoserine to L-homoserine phosphate. The polypeptide is Homoserine kinase (Xylella fastidiosa (strain 9a5c)).